A 113-amino-acid polypeptide reads, in one-letter code: Large ribosomal subunit protein uL24 (113 aa).

The protein belongs to the universal ribosomal protein uL24 family. Part of the 50S ribosomal subunit.

Functionally, one of two assembly initiator proteins, it binds directly to the 5'-end of the 23S rRNA, where it nucleates assembly of the 50S subunit. Its function is as follows. One of the proteins that surrounds the polypeptide exit tunnel on the outside of the subunit. The protein is Large ribosomal subunit protein uL24 (rplX) of Fusobacterium nucleatum subsp. nucleatum (strain ATCC 25586 / DSM 15643 / BCRC 10681 / CIP 101130 / JCM 8532 / KCTC 2640 / LMG 13131 / VPI 4355).